We begin with the raw amino-acid sequence, 105 residues long: Urease subunit beta (105 aa).

This sequence belongs to the urease beta subunit family. In terms of assembly, heterotrimer of UreA (gamma), UreB (beta) and UreC (alpha) subunits. Three heterotrimers associate to form the active enzyme.

The protein localises to the cytoplasm. The enzyme catalyses urea + 2 H2O + H(+) = hydrogencarbonate + 2 NH4(+). Its pathway is nitrogen metabolism; urea degradation; CO(2) and NH(3) from urea (urease route): step 1/1. The protein is Urease subunit beta of Pseudomonas putida (strain GB-1).